The chain runs to 622 residues: DNA-directed RNA polymerase subunit gamma (622 aa).

Residues Cys70, Cys72, Cys85, and Cys88 each coordinate Zn(2+). Asp466, Asp468, and Asp470 together coordinate Mg(2+).

The protein belongs to the RNA polymerase beta' chain family. RpoC1 subfamily. As to quaternary structure, in cyanobacteria the RNAP catalytic core is composed of 2 alpha, 1 beta, 1 beta', 1 gamma and 1 omega subunit. When a sigma factor is associated with the core the holoenzyme is formed, which can initiate transcription. Mg(2+) serves as cofactor. Requires Zn(2+) as cofactor.

The catalysed reaction is RNA(n) + a ribonucleoside 5'-triphosphate = RNA(n+1) + diphosphate. In terms of biological role, DNA-dependent RNA polymerase catalyzes the transcription of DNA into RNA using the four ribonucleoside triphosphates as substrates. In Thermosynechococcus vestitus (strain NIES-2133 / IAM M-273 / BP-1), this protein is DNA-directed RNA polymerase subunit gamma.